The sequence spans 100 residues: Small ribosomal subunit protein uS14c (100 aa).

The protein belongs to the universal ribosomal protein uS14 family. As to quaternary structure, part of the 30S ribosomal subunit.

The protein localises to the plastid. The protein resides in the chloroplast. Functionally, binds 16S rRNA, required for the assembly of 30S particles. This Angiopteris evecta (Mule's foot fern) protein is Small ribosomal subunit protein uS14c.